Consider the following 749-residue polypeptide: Transcription factor RFX3 (749 aa).

The RFX-type winged-helix DNA-binding region spans 183-258 (HLQWLLDNYE…YHYYGIRVKP (76 aa)). The interval 663-699 (VSPGNLDKDEGSEVESEMDEELDDSSEPQAKREKTEL) is disordered. Positions 674–688 (SEVESEMDEELDDSS) are enriched in acidic residues.

This sequence belongs to the RFX family. In terms of assembly, heterodimer; heterodimerizes with RFX1 and RFX2, and RFX6.

Its subcellular location is the nucleus. Its function is as follows. Transcription factor required for ciliogenesis and islet cell differentiation during endocrine pancreas development. Essential for the differentiation of nodal monocilia and left-right asymmetry specification during embryogenesis. Required for the biogenesis of motile cilia by governing growth and beating efficiency of motile cells. Also required for ciliated ependymal cell differentiation. Regulates the expression of genes involved in ciliary assembly (DYNC2LI1, FOXJ1 and BBS4) and genes involved in ciliary motility (DNAH11, DNAH9 and DNAH5). Together with RFX6, participates in the differentiation of 4 of the 5 islet cell types during endocrine pancreas development, with the exception of pancreatic PP (polypeptide-producing) cells. Regulates transcription by forming a heterodimer with another RFX protein and binding to the X-box in the promoter of target genes. Represses transcription of MAP1A in non-neuronal cells but not in neuronal cells. This Homo sapiens (Human) protein is Transcription factor RFX3 (RFX3).